We begin with the raw amino-acid sequence, 739 residues long: Exocyst complex component 3-like protein (739 aa).

2 disordered regions span residues 1 to 21 (MDSK…PEWP) and 698 to 718 (AALS…RRAL). The tract at residues 1-370 (MDSKIQPTLR…DVSQLEPLLT (370 aa)) is mediates interaction with EXOC2, EXOC4 and EXOC5.

The protein belongs to the SEC6 family. Interacts with EXOC2, EXOC4 and EXOC5; may be part of the exocyst. In terms of tissue distribution, ubiquitously expressed.

It is found in the cytoplasmic vesicle. The protein localises to the secretory vesicle. As part of the exocyst, may play a role in regulated exocytosis of insulin granules. In Mus musculus (Mouse), this protein is Exocyst complex component 3-like protein (Exoc3l1).